The following is a 341-amino-acid chain: Protein quaking-A (341 aa).

The 67-residue stretch at 87–153 (FVPVKEYPDY…WEHLNEDLHV (67 aa)) folds into the KH domain. The SH3-binding motif lies at 276–279 (PPTP). Residues 324–330 (RVHPYQR) carry the Nuclear localization signal motif.

This sequence belongs to the quaking family. Homodimer; does not require RNA to homodimerize.

It is found in the cytoplasm. It localises to the nucleus. Its function is as follows. RNA reader protein, which recognizes and binds specific RNAs, thereby regulating RNA metabolic processes, such as pre-mRNA splicing, circular RNA (circRNA) formation, mRNA export, mRNA stability and/or translation. Involved in various cellular processes, such as mRNA storage into stress granules, apoptosis, interferon response, glial cell fate and development. Binds to the 5'-NACUAAY-N(1,20)-UAAY-3' RNA core sequence. Acts as a mRNA modification reader that specifically recognizes and binds mRNA transcripts modified by internal N(7)-methylguanine (m7G). Promotes the formation of circular RNAs (circRNAs): acts by binding to sites flanking circRNA-forming exons. CircRNAs are produced by back-splicing circularization of pre-mRNAs. Required to protect and promote stability of mRNAs which promotes oligodendrocyte differentiation. Acts as an important regulator of muscle development: required during early skeletal myofibril formation by regulating the accumulation of the muscle-specific tropomyosin-3 (tpm3) transcripts. The sequence is that of Protein quaking-A from Danio rerio (Zebrafish).